A 300-amino-acid polypeptide reads, in one-letter code: Jacalin-related lectin 32 (300 aa).

N-acetylalanine is present on Ala2. Jacalin-type lectin domains follow at residues 2–146 and 154–297; these read AQKV…YFTT and AKKL…HILP.

The protein belongs to the jacalin lectin family.

Its function is as follows. Involved in gametophytic development. This chain is Jacalin-related lectin 32 (JAL32), found in Arabidopsis thaliana (Mouse-ear cress).